A 291-amino-acid chain; its full sequence is Trimeric intracellular cation channel type B (291 aa).

The Lumenal portion of the chain corresponds to 1-19 (MDSPWDELALAFSRTSMFP). Residues 20–33 (FFDIAHYLVSVMAV) form a helical membrane-spanning segment. The Cytoplasmic portion of the chain corresponds to 34-50 (KRQPGAAALAWKNPISS). The helical transmembrane segment at 51 to 70 (WFTAMLHCFGGGILSCLLLA) threads the bilayer. Over 71–82 (EPPLKFLANHTN) the chain is Lumenal. Residues 83–99 (ILLASSIWYITFFCPHD) traverse the membrane as a helical segment. Residues 100–104 (LVSQG) are Cytoplasmic-facing. Residues 105–121 (YSYLPVQLLASGMKEVT) form a helical membrane-spanning segment. A 1,2-diacyl-sn-glycero-3-phospho-(1D-myo-inositol-4,5-bisphosphate) is bound by residues K118 and R122. Over 122 to 139 (RTWKIVGGVTHANSYYKN) the chain is Lumenal. The helical transmembrane segment at 140–156 (GWIVMIAIGWARGAGGT) threads the bilayer. At 157 to 179 (IITNFERLVKGDWKPEGDEWLKM) the chain is on the cytoplasmic side. The helical transmembrane segment at 180–195 (SYPAKVTLLGSVIFTF) threads the bilayer. The Lumenal portion of the chain corresponds to 196–207 (QHTQHLAISKHN). A helical membrane pass occupies residues 208 to 227 (LMFLYTIFIVATKITMMTTQ). The Cytoplasmic segment spans residues 228–291 (TSTMTFAPFE…VKKKHTKKNE (64 aa)). The tract at residues 256 to 291 (KKSEAKSPSNGVGSLASKPVDVASDNVKKKHTKKNE) is disordered. Position 262 is a phosphoserine (S262).

The protein belongs to the TMEM38 family. Homotrimer; conformation seems to be controled by binding to diacylglycerol (DAG).

The protein localises to the endoplasmic reticulum membrane. The enzyme catalyses K(+)(in) = K(+)(out). Channel activity is activated by increased cytosolic Ca(2+) levels and blocked by luminal high Ca(2+) levels. Its function is as follows. Intracellular monovalent cation channel required for maintenance of rapid intracellular calcium release. Acts as a potassium counter-ion channel that functions in synchronization with calcium release from intracellular stores. Activated by increased cytosolic Ca(2+) levels. This chain is Trimeric intracellular cation channel type B, found in Homo sapiens (Human).